A 1119-amino-acid chain; its full sequence is Transient receptor potential cation channel subfamily A member 1 (1119 aa).

The Cytoplasmic segment spans residues 1 to 718; sequence MKRSLRKMWR…MKWLAYGFRA (718 aa). ANK repeat units lie at residues 62–92, 97–126, 130–160, 164–193, 197–226, 238–267, 271–301, 308–337, 341–370, 374–403, 412–441, 445–474, 481–510, 513–542, 547–576, and 579–609; these read MDTF…EVLH, YGNT…NPNL, NMMA…DVNL, NGNT…KPCK, WGCF…EHGY, GKAT…QIDP, GRCT…SVDI, CHET…DINK, EGRS…QVDI, FGRN…QQIK, DGCT…SIHS, DKKS…DTRL, HGMT…LFLS, NGWT…KCTD, DGNT…DIVL, and QQAS…DECL. 5 disulfide bridges follow: cysteine 192–cysteine 665, cysteine 462–cysteine 665, cysteine 608–cysteine 621, cysteine 621–cysteine 665, and cysteine 633–cysteine 856. Proline 394 is modified (4-hydroxyproline; by EGLN1; transient; in normoxia and hyperoxia). (E)-cinnamaldehyde-binding residues include cysteine 414 and cysteine 421. Cysteine 621 serves as a coordination point for (E)-cinnamaldehyde. Cysteine 633 carries the post-translational modification Cysteine sulfenic acid (-SOH); transient; in hyperoxia. (E)-cinnamaldehyde-binding residues include cysteine 641, cysteine 665, and lysine 710. A helical membrane pass occupies residues 719-739; the sequence is HMMNLGSYCLGLIPMTILVVN. Over 740-767 the chain is Extracellular; the sequence is IKPGMAFNSTGIINETSDHSEILDTTNS. N-linked (GlcNAc...) asparagine glycans are attached at residues asparagine 747 and asparagine 753. A helical transmembrane segment spans residues 768–793; that stretch reads YLIKTCMILVFLSSIFGYCKEAGQIF. 2 residues coordinate Ca(2+): glutamate 788 and glutamine 791. Residues 794–798 are Cytoplasmic-facing; the sequence is QQKRN. The helical transmembrane segment at 799 to 823 threads the bilayer; it reads YFMDISNVLEWIIYTTGIIFVLPLF. 2 residues coordinate Ca(2+): asparagine 805 and glutamate 808. The Extracellular portion of the chain corresponds to 824–829; it reads VEIPAH. Residues 830–850 form a helical membrane-spanning segment; sequence LQWQCGAIAVYFYWMNFLLYL. The Cytoplasmic portion of the chain corresponds to 851 to 862; the sequence is QRFENCGIFIVM. Cysteine 856 is subject to Cysteine sulfenic acid (-SOH); transient; in hyperoxia. A helical membrane pass occupies residues 863–892; that stretch reads LEVILKTLLRSTVVFIFLLLAFGLSFYILL. Residues 893-901 are Extracellular-facing; the sequence is NLQDPFSSP. The pore-forming intramembrane region spans 902–922; the sequence is LLSIIQTFSMMLGDINYRESF. Topologically, residues 923–933 are extracellular; it reads LEPYLRNELAH. The helical transmembrane segment at 934–960 threads the bilayer; it reads PVLSFAQLVSFTIFVPIVLMNLLIGLA. The Cytoplasmic portion of the chain corresponds to 961 to 1119; it reads VGDIAEVQKH…VKAKTHHLEP (159 aa). The stretch at 1042-1071 forms a coiled coil; it reads MEILKQKYRLKDLTFLLEKQHELIKLIIQK. Residue 1046–1052 coordinates a 1,2-diacyl-sn-glycero-3-phospho-(1D-myo-inositol); the sequence is KQKYRLK.

It belongs to the transient receptor (TC 1.A.4) family. As to quaternary structure, homotetramer. Interacts with TMEM100. Interacts with EGLN1. Interacts with the scorpion wasabi receptor toxin at the same site that electrophiles but in a non-covalent manner. Post-translationally, TRPA1 activation by electrophiles occurs though covalent modification of specific cysteine residues in the N-terminal cytoplasmic domain. Hydroxylation is required for TRPA1 activity inhibition in normoxia. In hypoxia, the decrease in oxygen concentration diminishes the activity of the hydroxylase EGLN1, thus relieving TRPA1 from inhibition and ultimately leading to channel activation. In terms of processing, oxidation of Cys-633 and Cys-856 in hyperoxia may override the hydroxylase EGLN1-mediated inhibition, causing TRPA1 activation.

Its subcellular location is the cell membrane. The enzyme catalyses Ca(2+)(in) = Ca(2+)(out). It carries out the reaction Mg(2+)(in) = Mg(2+)(out). It catalyses the reaction Na(+)(in) = Na(+)(out). The catalysed reaction is K(+)(in) = K(+)(out). The enzyme catalyses Zn(2+)(in) = Zn(2+)(out). Its activity is regulated as follows. Electrophilic ligands activate the channel by covalent modification of intracellular cysteines; Cys-621 plays a key role in covalent binding of electrophiles. Extracellular Ca(2+) both potentiates and inactivates TRPA1; a rapid potentiation follows by slow desensitization. Activated by increase in intracellular Ca(2+) concentration. Inhibited by the potent blocker of TRPV channels ruthenium red, A-967079, AP-18, HC-030031, and aryl sulfonamide derivative (S)-N-(4-chlorobenzyl)-1-((4-fluorophenyl)sulfonyl)pyrrolidine-2-carboxamide (ASD). Activated by benzyl isothiocyanate (BITC), iodoacetamide, sulfhydryl reactive agent MTSEA, N-methyl maleimide (NMM), N-ethylmaleimide (NEM), and 2-aminoethyldiphenylborinate (2-APB). Also activated by hyperoxia. Acivated by intracellular Zn(2+). TRPA1 activation may critically depend on the presence of small intracellular compounds such as polyphosphates. Functionally, ligand-activated Ca(2+)-permeable, nonselective cation channel involved in pain detection and possibly also in cold perception, oxygen concentration perception, cough, itch, and inner ear function. Has a relatively high Ca(2+) selectivity, with a preference for divalent over monovalent cations (Ca(2+) &gt; Ba(2+) &gt; Mg(2+) &gt; NH4(+) &gt; Li(+) &gt; K(+)), the influx of cation into the cytoplasm leads to membrane depolarization. Has a central role in the pain response to endogenous inflammatory mediators, such as bradykinin and to a diverse array of irritants. Activated by a large variety of structurally unrelated electrophilic and non-electrophilic chemical compounds, such as allylthiocyanate (AITC) from mustard oil or wasabi, cinnamaldehyde, diallyl disulfide (DADS) from garlic, and acrolein, an environmental irritant. Electrophilic ligands activate TRPA1 by interacting with critical N-terminal Cys residues in a covalent manner. Non-electrophile agonists bind at distinct sites in the transmembrane domain to promote channel activation. Also acts as an ionotropic cannabinoid receptor by being activated by delta(9)-tetrahydrocannabinol (THC), the psychoactive component of marijuana. May be a component for the mechanosensitive transduction channel of hair cells in inner ear, thereby participating in the perception of sounds. The sequence is that of Transient receptor potential cation channel subfamily A member 1 from Homo sapiens (Human).